The chain runs to 294 residues: DNA adenine methyltransferase YhdJ (294 aa).

Residues 275-294 (TGNLSKRSRLSEVDPDLITK) form a disordered region. The span at 283–294 (RLSEVDPDLITK) shows a compositional bias: basic and acidic residues.

It belongs to the N(4)/N(6)-methyltransferase family.

It catalyses the reaction a 2'-deoxyadenosine in DNA + S-adenosyl-L-methionine = an N(6)-methyl-2'-deoxyadenosine in DNA + S-adenosyl-L-homocysteine + H(+). In terms of biological role, a beta subtype methylase, recognizes the double-stranded sequence 5'-ATGCAT-3' and methylates A-5. The polypeptide is DNA adenine methyltransferase YhdJ (yhdJ) (Escherichia coli (strain K12)).